A 79-amino-acid chain; its full sequence is Aquaporin Z (79 aa).

2 helical membrane-spanning segments follow: residues 4–24 (LFAE…SAVF) and 33–53 (IGFA…AYAV). An NPA 1 motif is present at residues 62–64 (NPA).

It belongs to the MIP/aquaporin (TC 1.A.8) family. Homotetramer.

It is found in the cell membrane. It carries out the reaction H2O(in) = H2O(out). In terms of biological role, channel that permits osmotically driven movement of water in both directions. It is involved in the osmoregulation and in the maintenance of cell turgor during volume expansion in rapidly growing cells. It mediates rapid entry or exit of water in response to abrupt changes in osmolarity. In Flavobacterium johnsoniae (Cytophaga johnsonae), this protein is Aquaporin Z.